A 156-amino-acid polypeptide reads, in one-letter code: Arginine repressor (156 aa).

The protein belongs to the ArgR family.

The protein localises to the cytoplasm. It participates in amino-acid biosynthesis; L-arginine biosynthesis [regulation]. Functionally, regulates arginine biosynthesis genes. In Sodalis glossinidius (strain morsitans), this protein is Arginine repressor.